The following is a 406-amino-acid chain: Phosphorylase b kinase gamma catalytic chain, liver/testis isoform (406 aa).

The Protein kinase domain maps to 24 to 291 (YDPKDIIGRG…AEQALQHPFF (268 aa)). ATP-binding positions include 30–38 (IGRGVSSVV) and Lys53. Asp153 serves as the catalytic Proton acceptor. The interval 306–330 (QRFRVAVWTILAAGRVALSSHRLRP) is calmodulin-binding (domain-N). Residues 346–370 (VRRLIDNCAFRLYGHWVKKGEQQNR) are calmodulin-binding (domain-C).

The protein belongs to the protein kinase superfamily. CAMK Ser/Thr protein kinase family. In terms of assembly, hexadecamer of 4 heterotetramers, each composed of alpha, beta, gamma, and delta subunits. Alpha (PHKA1 or PHKA2) and beta (PHKB) are regulatory subunits, gamma (PHKG1 or PHKG2) is the catalytic subunit, and delta is calmodulin.

It catalyses the reaction 2 ATP + phosphorylase b = 2 ADP + phosphorylase a.. Its function is as follows. Catalytic subunit of the phosphorylase b kinase (PHK), which mediates the neural and hormonal regulation of glycogen breakdown (glycogenolysis) by phosphorylating and thereby activating glycogen phosphorylase. May regulate glycogeneolysis in the testis. In vitro, phosphorylates PYGM. This Rattus norvegicus (Rat) protein is Phosphorylase b kinase gamma catalytic chain, liver/testis isoform (Phkg2).